A 597-amino-acid chain; its full sequence is Aspartate--tRNA ligase (597 aa).

E173 contributes to the L-aspartate binding site. Residues 197 to 200 (QLFK) form an aspartate region. Residue R219 coordinates L-aspartate. ATP-binding positions include 219 to 221 (RDE) and Q228. Residue H449 coordinates L-aspartate. Residue E483 coordinates ATP. R490 is a binding site for L-aspartate. Position 535–538 (535–538 (GLDR)) interacts with ATP.

The protein belongs to the class-II aminoacyl-tRNA synthetase family. Type 1 subfamily. Homodimer.

It localises to the cytoplasm. The catalysed reaction is tRNA(Asp) + L-aspartate + ATP = L-aspartyl-tRNA(Asp) + AMP + diphosphate. Functionally, catalyzes the attachment of L-aspartate to tRNA(Asp) in a two-step reaction: L-aspartate is first activated by ATP to form Asp-AMP and then transferred to the acceptor end of tRNA(Asp). The protein is Aspartate--tRNA ligase of Shewanella pealeana (strain ATCC 700345 / ANG-SQ1).